The chain runs to 278 residues: OX-2 membrane glycoprotein (278 aa).

A signal peptide spans 1-30; it reads MERLVIRMPFSHLSTYSLVWVMAAVVLCTA. One can recognise an Ig-like V-type domain in the interval 31–141; the sequence is QVQVVTQDER…SGTACLTVYV (111 aa). Over 31–232 the chain is Extracellular; the sequence is QVQVVTQDER…TDFKQTVNKG (202 aa). 2 cysteine pairs are disulfide-bonded: C51–C121 and C118–C136. N-linked (GlcNAc...) asparagine glycans are attached at residues N95, N103, and N110. One can recognise an Ig-like C2-type domain in the interval 142–232; the sequence is QPIVSLHYKF…TDFKQTVNKG (91 aa). N-linked (GlcNAc...) asparagine glycans are attached at residues N157, N181, and N190. The cysteines at positions 160 and 214 are disulfide-linked. The helical transmembrane segment at 233-259 threads the bilayer; the sequence is YWFSVPLLLSIVSLVILLVLISILLYW. At 260–278 the chain is on the cytoplasmic side; it reads KRHRNQDRGELSQGVQKMT.

As to quaternary structure, CD200 and CD200R1 interact via their respective N-terminal Ig-like domains.

It is found in the cell membrane. In terms of biological role, costimulates T-cell proliferation. May regulate myeloid cell activity in a variety of tissues. In Homo sapiens (Human), this protein is OX-2 membrane glycoprotein (CD200).